Reading from the N-terminus, the 70-residue chain is Large ribosomal subunit protein bL31 (70 aa).

Zn(2+)-binding residues include C16, C18, C37, and C40.

Belongs to the bacterial ribosomal protein bL31 family. Type A subfamily. As to quaternary structure, part of the 50S ribosomal subunit. Zn(2+) serves as cofactor.

Functionally, binds the 23S rRNA. This Shewanella sediminis (strain HAW-EB3) protein is Large ribosomal subunit protein bL31.